The primary structure comprises 198 residues: Putative pseudouridine methyltransferase (198 aa).

S-adenosyl-L-methionine-binding residues include methionine 132 and cysteine 186.

Belongs to the methyltransferase superfamily. TrmY family.

The protein resides in the cytoplasm. This Shewanella baltica (strain OS223) protein is Putative pseudouridine methyltransferase.